Here is a 124-residue protein sequence, read N- to C-terminus: Fluoride-specific ion channel FluC (124 aa).

The next 4 membrane-spanning stretches (helical) occupy residues 5 to 25, 32 to 52, 61 to 81, and 94 to 114; these read LLVS…AVWF, FAFG…ITLG, LLFV…SAEV, and LAVI…GILV. The Na(+) site is built by Gly69 and Thr72.

The protein belongs to the fluoride channel Fluc/FEX (TC 1.A.43) family.

It localises to the cell inner membrane. The enzyme catalyses fluoride(in) = fluoride(out). Na(+) is not transported, but it plays an essential structural role and its presence is essential for fluoride channel function. Its function is as follows. Fluoride-specific ion channel. Important for reducing fluoride concentration in the cell, thus reducing its toxicity. This Haemophilus ducreyi (strain 35000HP / ATCC 700724) protein is Fluoride-specific ion channel FluC.